The primary structure comprises 415 residues: Esterase FrsA (415 aa).

The protein belongs to the FrsA family. In terms of assembly, monomer in solution. Homodimer. Forms a 1:1 complex with the unphosphorylated form of the EIIA component of the glucose-specific PTS system (IIAGlc).

The enzyme catalyses a carboxylic ester + H2O = an alcohol + a carboxylate + H(+). In terms of biological role, catalyzes the hydrolysis of esters. In vitro, prefers short chain alkanoate ester as substrate. Displays highest activity towards p-nitrophenyl acetate (pNPA). Has weaker activity towards p-nitrophenyl butyrate (pNPB). The protein is Esterase FrsA of Vibrio vulnificus (strain CMCP6).